The primary structure comprises 1088 residues: Myocardin-related transcription factor B (1088 aa).

At Glu-22 the chain carries Phosphoserine. Residues Glu-40–Lys-65 form an RPEL 1 repeat. Ser-66 carries the post-translational modification Phosphoserine. 2 RPEL repeats span residues Asn-84–Phe-109 and Asp-128–Ser-153. Disordered stretches follow at residues Glu-165 to Gln-310, Lys-349 to Leu-389, Ala-472 to Asp-508, and Leu-528 to Glu-553. The span at Ser-197–Val-213 shows a compositional bias: low complexity. The segment covering Thr-214–Pro-226 has biased composition (polar residues). Positions Ala-238–Pro-248 are enriched in pro residues. The segment covering Asn-272–Pro-287 has biased composition (basic and acidic residues). Positions Asn-355–Ala-366 are enriched in low complexity. Phosphothreonine is present on residues Thr-367 and Thr-370. Polar residues predominate over residues Thr-367–Pro-378. One can recognise an SAP domain in the interval Leu-389 to Gln-423. Residues Leu-528 to Asp-540 are compositionally biased toward polar residues. Residues Ser-541 and Ser-543 each carry the phosphoserine modification. Low complexity predominate over residues Ser-541–Ser-550. Residues Thr-545 to Arg-601 adopt a coiled-coil conformation. The segment at Leu-563–Leu-591 is required for interaction with itself and with MRTFA. 2 disordered regions span residues Lys-595 to Ser-655 and Asn-829 to Ala-886. Residue Lys-628 forms a Glycyl lysine isopeptide (Lys-Gly) (interchain with G-Cter in SUMO1) linkage. A compositionally biased stretch (polar residues) spans Asn-829 to Gly-838. The span at Lys-867 to Lys-879 shows a compositional bias: basic and acidic residues. Ser-921 carries the post-translational modification Phosphoserine.

Interacts with MRTFA and SRF. In terms of processing, O-glycosylated.

The protein resides in the nucleus. Functionally, acts as a transcriptional coactivator of serum response factor (SRF). Required for skeletal myogenic differentiation. The sequence is that of Myocardin-related transcription factor B from Homo sapiens (Human).